Consider the following 493-residue polypeptide: Putative lon protease homolog (493 aa).

52-59 (GPPGVGKS) provides a ligand contact to ATP.

The protein belongs to the peptidase S16 family.

This is Putative lon protease homolog from Thermoplasma acidophilum (strain ATCC 25905 / DSM 1728 / JCM 9062 / NBRC 15155 / AMRC-C165).